Here is a 302-residue protein sequence, read N- to C-terminus: tRNA-cytidine(32) 2-sulfurtransferase (302 aa).

The PP-loop motif signature appears at 43 to 48 (SGGKDS). [4Fe-4S] cluster-binding residues include Cys-118, Cys-121, and Cys-209.

Belongs to the TtcA family. In terms of assembly, homodimer. It depends on Mg(2+) as a cofactor. [4Fe-4S] cluster is required as a cofactor.

Its subcellular location is the cytoplasm. It catalyses the reaction cytidine(32) in tRNA + S-sulfanyl-L-cysteinyl-[cysteine desulfurase] + AH2 + ATP = 2-thiocytidine(32) in tRNA + L-cysteinyl-[cysteine desulfurase] + A + AMP + diphosphate + H(+). It participates in tRNA modification. Its function is as follows. Catalyzes the ATP-dependent 2-thiolation of cytidine in position 32 of tRNA, to form 2-thiocytidine (s(2)C32). The sulfur atoms are provided by the cysteine/cysteine desulfurase (IscS) system. The polypeptide is tRNA-cytidine(32) 2-sulfurtransferase (Polynucleobacter necessarius subsp. necessarius (strain STIR1)).